Reading from the N-terminus, the 360-residue chain is Peptide chain release factor 1 (360 aa).

Glutamine 234 bears the N5-methylglutamine mark.

The protein belongs to the prokaryotic/mitochondrial release factor family. Methylated by PrmC. Methylation increases the termination efficiency of RF1.

The protein localises to the cytoplasm. Its function is as follows. Peptide chain release factor 1 directs the termination of translation in response to the peptide chain termination codons UAG and UAA. In Clostridium botulinum (strain Eklund 17B / Type B), this protein is Peptide chain release factor 1.